The following is a 783-amino-acid chain: DNA repair and recombination protein RAD54-like (783 aa).

A required for chromatin remodeling, strand pairing activities and coupling of ATPase activity region spans residues 2-9; it reads RRSLAPSQ. At threonine 22 the chain carries Phosphothreonine. In terms of domain architecture, Helicase ATP-binding spans 165-340; that stretch reads EGKRGNFNGC…FSLVNFVNPE (176 aa). An ATP-binding site is contributed by 178–185; it reads DEMGLGKT. The DEGH box signature appears at 291–294; sequence DEGH. The region spanning 497-654 is the Helicase C-terminal domain; that stretch reads LLDFMLAAIR…NNESSEKHFT (158 aa). The disordered stretch occupies residues 737–783; it reads AESKPAAITEDDESEQQQQSPKRTSKNDDNDEDFDPENSAEEQFLGF. Positions 765–776 are enriched in acidic residues; sequence DNDEDFDPENSA.

It belongs to the SNF2/RAD54 helicase family. As to quaternary structure, interacts (via N-terminus) with spn-A/Rad51.

The protein localises to the nucleus. In terms of biological role, involved in mitotic DNA repair and meiotic recombination. Functions in the recombinational DNA repair pathway. Essential for interhomolog gene conversion (GC), but may have a less important role in intersister GC than spn-A/Rad51. In the presence of DNA, spn-A/Rad51 enhances the ATPase activity of okr/Rad54. The chain is DNA repair and recombination protein RAD54-like from Drosophila mojavensis (Fruit fly).